The primary structure comprises 688 residues: Potassium-transporting ATPase ATP-binding subunit (688 aa).

4 consecutive transmembrane segments (helical) span residues 34 to 54 (PVMF…LAIL), 62 to 82 (ALFT…ANFA), 219 to 239 (VALT…TATL), and 260 to 280 (VLVA…LSAI). Asp313 functions as the 4-aspartylphosphate intermediate in the catalytic mechanism. Residues Asp350, Glu354, 383–390 (FSAQTRMS), and Lys401 each bind ATP. Residues Asp524 and Asp528 each contribute to the Mg(2+) site. 3 helical membrane-spanning segments follow: residues 594–614 (FAII…LNVM), 622–642 (AILS…PLAL), and 667–687 (GLLV…ALIM).

It belongs to the cation transport ATPase (P-type) (TC 3.A.3) family. Type IA subfamily. As to quaternary structure, the system is composed of three essential subunits: KdpA, KdpB and KdpC.

The protein resides in the cell inner membrane. It catalyses the reaction K(+)(out) + ATP + H2O = K(+)(in) + ADP + phosphate + H(+). Its function is as follows. Part of the high-affinity ATP-driven potassium transport (or Kdp) system, which catalyzes the hydrolysis of ATP coupled with the electrogenic transport of potassium into the cytoplasm. This subunit is responsible for energy coupling to the transport system and for the release of the potassium ions to the cytoplasm. This is Potassium-transporting ATPase ATP-binding subunit from Yersinia enterocolitica serotype O:8 / biotype 1B (strain NCTC 13174 / 8081).